We begin with the raw amino-acid sequence, 322 residues long: Cytochrome c biogenesis protein CcsA (322 aa).

Transmembrane regions (helical) follow at residues 9–29 (ILTH…LITL), 44–64 (GMIA…IYSG), 71–91 (LYES…VPYF), 98–118 (LTTI…SGLL), 143–163 (MILS…LLVI), 226–246 (VISL…VWAN), 253–273 (WSWD…AIYL), and 287–307 (AIVA…VNLL).

The protein belongs to the CcmF/CycK/Ccl1/NrfE/CcsA family. In terms of assembly, may interact with Ccs1.

The protein resides in the plastid. It localises to the chloroplast thylakoid membrane. Functionally, required during biogenesis of c-type cytochromes (cytochrome c6 and cytochrome f) at the step of heme attachment. The protein is Cytochrome c biogenesis protein CcsA of Helianthus annuus (Common sunflower).